We begin with the raw amino-acid sequence, 149 residues long: MAFETTFVMLKPGVLQRRLVGEVLSRFERKGLVLTALRLLCVDTATAELHYAEHREKPFYPSLIAYITSAPVVALAFKGENAISLVRTLCGSTRVEHAQPGTIRGDFALRTTTNIVHASDSPESAARELALYFSAQDFVEWRDGNYDFF.

ATP is bound by residues Lys11, Phe59, Arg87, Thr93, Arg104, and Asn114. Catalysis depends on His117, which acts as the Pros-phosphohistidine intermediate.

It belongs to the NDK family. In terms of assembly, homotetramer. Mg(2+) is required as a cofactor.

It is found in the cytoplasm. The catalysed reaction is a 2'-deoxyribonucleoside 5'-diphosphate + ATP = a 2'-deoxyribonucleoside 5'-triphosphate + ADP. The enzyme catalyses a ribonucleoside 5'-diphosphate + ATP = a ribonucleoside 5'-triphosphate + ADP. Major role in the synthesis of nucleoside triphosphates other than ATP. The ATP gamma phosphate is transferred to the NDP beta phosphate via a ping-pong mechanism, using a phosphorylated active-site intermediate. This chain is Nucleoside diphosphate kinase, found in Treponema pallidum (strain Nichols).